We begin with the raw amino-acid sequence, 442 residues long: Putative zinc metalloprotease PM1991 (442 aa).

A Zn(2+)-binding site is contributed by histidine 21. Glutamate 22 is an active-site residue. Residue histidine 25 coordinates Zn(2+). A helical membrane pass occupies residues 97-119; the sequence is AFVIAAGPIANFLFAILAYFTIY. The 89-residue stretch at 198–286 folds into the PDZ domain; that stretch reads DWRFDPEKES…FSFVVLTPEL (89 aa). Transmembrane regions (helical) follow at residues 366-388 and 418-440; these read IGLI…MNLF and LSYR…NDFL.

It belongs to the peptidase M50B family. It depends on Zn(2+) as a cofactor.

It localises to the cell inner membrane. This Pasteurella multocida (strain Pm70) protein is Putative zinc metalloprotease PM1991.